A 347-amino-acid polypeptide reads, in one-letter code: Protein-glutamate methylesterase/protein-glutamine glutaminase 3 (347 aa).

The region spanning 3-120 is the Response regulatory domain; sequence QVFIVDDSAV…KNFLEESEIL (118 aa). 4-aspartylphosphate is present on Asp54. The CheB-type methylesterase domain maps to 159 to 347; that stretch reads IDTTDKLIAI…SKIVGEVQYF (189 aa). Catalysis depends on residues Ser171, His197, and Asp293.

Belongs to the CheB family. Post-translationally, phosphorylated by CheA. Phosphorylation of the N-terminal regulatory domain activates the methylesterase activity.

It localises to the cytoplasm. It catalyses the reaction [protein]-L-glutamate 5-O-methyl ester + H2O = L-glutamyl-[protein] + methanol + H(+). It carries out the reaction L-glutaminyl-[protein] + H2O = L-glutamyl-[protein] + NH4(+). Functionally, involved in chemotaxis. Part of a chemotaxis signal transduction system that modulates chemotaxis in response to various stimuli. Catalyzes the demethylation of specific methylglutamate residues introduced into the chemoreceptors (methyl-accepting chemotaxis proteins or MCP) by CheR. Also mediates the irreversible deamidation of specific glutamine residues to glutamic acid. This Leptospira interrogans serogroup Icterohaemorrhagiae serovar copenhageni (strain Fiocruz L1-130) protein is Protein-glutamate methylesterase/protein-glutamine glutaminase 3.